Here is a 101-residue protein sequence, read N- to C-terminus: Small ribosomal subunit protein uS14 (101 aa).

This sequence belongs to the universal ribosomal protein uS14 family. In terms of assembly, part of the 30S ribosomal subunit. Contacts proteins S3 and S10.

In terms of biological role, binds 16S rRNA, required for the assembly of 30S particles and may also be responsible for determining the conformation of the 16S rRNA at the A site. The polypeptide is Small ribosomal subunit protein uS14 (Blochmanniella floridana).